The primary structure comprises 541 residues: Testis-specific chromodomain protein Y 2 (541 aa).

Residues 6 to 66 (FEVEAIVDKR…RQTEKQKKLT (61 aa)) enclose the Chromo domain. Residues 72–104 (RIFSNNARRRTSRSTKANYSKNSPKTPVTDKHH) are disordered. Over residues 87–97 (KANYSKNSPKT) the composition is skewed to polar residues.

Testis specific.

The protein localises to the nucleus. It catalyses the reaction L-lysyl-[protein] + acetyl-CoA = N(6)-acetyl-L-lysyl-[protein] + CoA + H(+). Its function is as follows. May have histone acetyltransferase activity. The protein is Testis-specific chromodomain protein Y 2 (CDY2A) of Homo sapiens (Human).